A 548-amino-acid polypeptide reads, in one-letter code: Chaperonin GroEL (548 aa).

ATP-binding positions include 30 to 33 (TLGP), Lys51, 87 to 91 (DGTTT), Gly415, 479 to 481 (NAA), and Asp495.

The protein belongs to the chaperonin (HSP60) family. Forms a cylinder of 14 subunits composed of two heptameric rings stacked back-to-back. Interacts with the co-chaperonin GroES.

Its subcellular location is the cytoplasm. The catalysed reaction is ATP + H2O + a folded polypeptide = ADP + phosphate + an unfolded polypeptide.. Its function is as follows. Together with its co-chaperonin GroES, plays an essential role in assisting protein folding. The GroEL-GroES system forms a nano-cage that allows encapsulation of the non-native substrate proteins and provides a physical environment optimized to promote and accelerate protein folding. The sequence is that of Chaperonin GroEL from Pectobacterium carotovorum subsp. carotovorum (strain PC1).